A 246-amino-acid chain; its full sequence is Sulfate transporter CysZ (246 aa).

4 helical membrane passes run 24 to 44 (LFVL…IGFA), 69 to 89 (IVWP…FTMV), 148 to 168 (LLVL…WILF), and 214 to 234 (LLIP…ATLF).

It belongs to the CysZ family.

It is found in the cell inner membrane. In terms of biological role, high affinity, high specificity proton-dependent sulfate transporter, which mediates sulfate uptake. Provides the sulfur source for the cysteine synthesis pathway. This is Sulfate transporter CysZ from Pseudomonas aeruginosa (strain LESB58).